The primary structure comprises 500 residues: Lycopene beta cyclase, chloroplastic (500 aa).

A chloroplast-targeting transit peptide spans 1–81; it reads MDTLLKTPNK…ELPMYDPSKG (81 aa). Position 86-114 (86-114) interacts with NAD(+); sequence LAVVGGGPAGLAVAQQVSEAGLSVVSIDP.

It belongs to the lycopene cyclase family.

Its subcellular location is the plastid. It localises to the chloroplast. The enzyme catalyses a carotenoid psi-end group = a carotenoid beta-end derivative. It participates in carotenoid biosynthesis; beta-carotene biosynthesis. It functions in the pathway carotenoid biosynthesis; beta-zeacarotene biosynthesis. Its function is as follows. Catalyzes the double cyclization reaction which converts lycopene to beta-carotene and neurosporene to beta-zeacarotene. This is Lycopene beta cyclase, chloroplastic (LCY1) from Nicotiana tabacum (Common tobacco).